Here is an 83-residue protein sequence, read N- to C-terminus: FMRFamide-like neuropeptide 23 (83 aa).

The first 24 residues, 1–24 (MLLPKISILLYILVVLQETAAVRG), serve as a signal peptide directing secretion. A propeptide spanning residues 25–36 (ALFRSGRAVPFE) is cleaved from the precursor. Phenylalanine 47 carries the phenylalanine amide modification. Residues 50-83 (AGMASGVGGGSEGGPDDVKNSYIRVNGEPEIVYQ) constitute a propeptide that is removed on maturation.

It belongs to the FARP (FMRFamide related peptide) family. As to expression, each flp gene is expressed in a distinct set of neurons.

It localises to the secreted. Its function is as follows. FMRFamides and FMRFamide-like peptides are neuropeptides. The protein is FMRFamide-like neuropeptide 23 (flp-23) of Caenorhabditis elegans.